Here is a 440-residue protein sequence, read N- to C-terminus: tRNA(Ile)-lysidine synthase (440 aa).

Residue 31–36 coordinates ATP; sequence SGGADS.

Belongs to the tRNA(Ile)-lysidine synthase family.

The protein resides in the cytoplasm. The enzyme catalyses cytidine(34) in tRNA(Ile2) + L-lysine + ATP = lysidine(34) in tRNA(Ile2) + AMP + diphosphate + H(+). Its function is as follows. Ligates lysine onto the cytidine present at position 34 of the AUA codon-specific tRNA(Ile) that contains the anticodon CAU, in an ATP-dependent manner. Cytidine is converted to lysidine, thus changing the amino acid specificity of the tRNA from methionine to isoleucine. In Borreliella burgdorferi (strain ATCC 35210 / DSM 4680 / CIP 102532 / B31) (Borrelia burgdorferi), this protein is tRNA(Ile)-lysidine synthase.